Reading from the N-terminus, the 207-residue chain is Protein GET1 (207 aa).

Over 1–4 the chain is Lumenal; it reads MPSL. A helical membrane pass occupies residues 5-24; the sequence is LISVLFLHIAIYIINTIAAS. Over 25-110 the chain is Cytoplasmic; it reads TIDSLLWLIY…FFDVAVKALR (86 aa). Positions 44-97 form a coiled coil; it reads IAREQHQMKLEVVQLKREMNATSSQDEFAKWAKLRRRHDKALEEYEVKNKQFSR. The helical transmembrane segment at 111–131 threads the bilayer; it reads WAGTSGLIVFLQFWFSKTPIF. The Lumenal segment spans residues 132–155; sequence TLPPSWIPWQVEWVLSFPRAPMGT. Residues 156-172 form a helical membrane-spanning segment; it reads VSIQVWGGACAVVVALI. Over 173–207 the chain is Cytoplasmic; the sequence is GEAIGATVRYLYASKDSMEAIKVGAGAVEKEKKRQ.

This sequence belongs to the WRB/GET1 family. In terms of assembly, interacts with GET3.

It localises to the endoplasmic reticulum membrane. Functionally, required for the post-translational delivery of tail-anchored (TA) proteins to the endoplasmic reticulum. Acts as a membrane receptor for soluble GET3, which recognizes and selectively binds the transmembrane domain of TA proteins in the cytosol. In Paracoccidioides brasiliensis (strain Pb18), this protein is Protein GET1.